We begin with the raw amino-acid sequence, 101 residues long: Acid shock protein (101 aa).

The N-terminal stretch at 1 to 21 (MKKVLALVVAAAMGLSSAAFA) is a signal peptide. A propeptide spanning residues 22–59 (AETTATAAPAASTAAPAKTVHHKKHHKAAKPAAEQKAQ) is cleaved from the precursor. Residues 26–39 (ATAAPAASTAAPAK) show a composition bias toward low complexity. The disordered stretch occupies residues 26–101 (ATAAPAASTA…AAKPAAQPAA (76 aa)). Basic residues-rich tracts occupy residues 40–50 (TVHHKKHHKAA), 60–69 (AAKKHHKKAA), and 79–88 (AAKKHHKKAA).

The protein belongs to the Asr family. In terms of processing, proteolytic processing gives rise to the active protein.

It localises to the periplasm. Its function is as follows. Required for growth and/or survival at acidic conditions. The polypeptide is Acid shock protein (asr) (Enterobacter cloacae).